Here is a 284-residue protein sequence, read N- to C-terminus: L-ribulose-5-phosphate 3-epimerase UlaE (284 aa).

The protein belongs to the L-ribulose-5-phosphate 3-epimerase family.

The catalysed reaction is L-ribulose 5-phosphate = L-xylulose 5-phosphate. The protein operates within cofactor degradation; L-ascorbate degradation; D-xylulose 5-phosphate from L-ascorbate: step 3/4. Functionally, catalyzes the isomerization of L-xylulose-5-phosphate to L-ribulose-5-phosphate. Is involved in the anaerobic L-ascorbate utilization. The chain is L-ribulose-5-phosphate 3-epimerase UlaE from Escherichia coli O17:K52:H18 (strain UMN026 / ExPEC).